Reading from the N-terminus, the 82-residue chain is MRGITGSSLQSRTVYTKKPKKKICKNCDSEFWAKAKYTEGYQDYCGFCRMVYRQDKRRIIKKSKVKGPTLYNPKVFSKRKPK.

This is an uncharacterized protein from Lactococcus lactis subsp. lactis (Streptococcus lactis).